A 149-amino-acid polypeptide reads, in one-letter code: UPF0178 protein VFMJ11_0615 (149 aa).

The protein belongs to the UPF0178 family.

This Aliivibrio fischeri (strain MJ11) (Vibrio fischeri) protein is UPF0178 protein VFMJ11_0615.